The following is a 121-amino-acid chain: Small ribosomal subunit protein uS13 (121 aa).

Residues 93–121 are disordered; sequence RKGLPVRGQKTKTNARTRKGKRKTVGAKS.

It belongs to the universal ribosomal protein uS13 family. As to quaternary structure, part of the 30S ribosomal subunit. Forms a loose heterodimer with protein S19. Forms two bridges to the 50S subunit in the 70S ribosome.

Located at the top of the head of the 30S subunit, it contacts several helices of the 16S rRNA. In the 70S ribosome it contacts the 23S rRNA (bridge B1a) and protein L5 of the 50S subunit (bridge B1b), connecting the 2 subunits; these bridges are implicated in subunit movement. Contacts the tRNAs in the A and P-sites. This Campylobacter lari (strain RM2100 / D67 / ATCC BAA-1060) protein is Small ribosomal subunit protein uS13.